We begin with the raw amino-acid sequence, 262 residues long: R3H domain-containing protein 4 (262 aa).

Disordered stretches follow at residues 1-27 (MVALDNSEGGPEATPSGETRLSLPGCL) and 132-155 (YLEDESQGKRRRGPGRGEDRRRED). Positions 146–155 (GRGEDRRRED) are enriched in basic and acidic residues. The R3H domain maps to 182–245 (METLESWEER…RRQMKVSNRH (64 aa)).

It localises to the nucleus. The polypeptide is R3H domain-containing protein 4 (R3hdm4) (Mus musculus (Mouse)).